We begin with the raw amino-acid sequence, 270 residues long: uncharacterized protein (270 aa).

In terms of domain architecture, ABC transporter spans Leu34–Asp266. Residue Gly66–Thr73 coordinates ATP.

It belongs to the ABC transporter superfamily.

This is an uncharacterized protein from Rhizobium meliloti (strain 1021) (Ensifer meliloti).